The sequence spans 397 residues: Acetate kinase (397 aa).

Asn9 contacts Mg(2+). Lys16 is a binding site for ATP. A substrate-binding site is contributed by Arg87. Catalysis depends on Asp144, which acts as the Proton donor/acceptor. ATP is bound by residues His204–Gly208, Asp279–Arg281, and Gly327–Asn331. Glu381 contributes to the Mg(2+) binding site.

The protein belongs to the acetokinase family. In terms of assembly, homodimer. It depends on Mg(2+) as a cofactor. Requires Mn(2+) as cofactor.

The protein localises to the cytoplasm. The enzyme catalyses acetate + ATP = acetyl phosphate + ADP. Its pathway is metabolic intermediate biosynthesis; acetyl-CoA biosynthesis; acetyl-CoA from acetate: step 1/2. Catalyzes the formation of acetyl phosphate from acetate and ATP. Can also catalyze the reverse reaction. This Chromobacterium violaceum (strain ATCC 12472 / DSM 30191 / JCM 1249 / CCUG 213 / NBRC 12614 / NCIMB 9131 / NCTC 9757 / MK) protein is Acetate kinase.